Consider the following 177-residue polypeptide: Coatomer subunit zeta-1 (177 aa).

This sequence belongs to the adaptor complexes small subunit family. In terms of assembly, oligomeric complex that consists of at least the alpha, beta, beta', gamma, delta, epsilon and zeta subunits.

It localises to the cytoplasm. The protein resides in the golgi apparatus membrane. Its subcellular location is the cytoplasmic vesicle. The protein localises to the COPI-coated vesicle membrane. In terms of biological role, the coatomer is a cytosolic protein complex that binds to dilysine motifs and reversibly associates with Golgi non-clathrin-coated vesicles, which further mediate biosynthetic protein transport from the ER, via the Golgi up to the trans Golgi network. Coatomer complex is required for budding from Golgi membranes, and is essential for the retrograde Golgi-to-ER transport of dilysine-tagged proteins. The zeta subunit may be involved in regulating the coat assembly and, hence, the rate of biosynthetic protein transport due to its association-dissociation properties with the coatomer complex. This chain is Coatomer subunit zeta-1, found in Arabidopsis thaliana (Mouse-ear cress).